The primary structure comprises 362 residues: Chorismate synthase (362 aa).

Residue arginine 47 coordinates NADP(+). Residues 124–126 (RSS), glycine 286, 301–305 (KPTAT), and arginine 327 contribute to the FMN site.

It belongs to the chorismate synthase family. As to quaternary structure, homotetramer. It depends on FMNH2 as a cofactor.

The enzyme catalyses 5-O-(1-carboxyvinyl)-3-phosphoshikimate = chorismate + phosphate. It functions in the pathway metabolic intermediate biosynthesis; chorismate biosynthesis; chorismate from D-erythrose 4-phosphate and phosphoenolpyruvate: step 7/7. Catalyzes the anti-1,4-elimination of the C-3 phosphate and the C-6 proR hydrogen from 5-enolpyruvylshikimate-3-phosphate (EPSP) to yield chorismate, which is the branch point compound that serves as the starting substrate for the three terminal pathways of aromatic amino acid biosynthesis. This reaction introduces a second double bond into the aromatic ring system. This Gloeothece citriformis (strain PCC 7424) (Cyanothece sp. (strain PCC 7424)) protein is Chorismate synthase.